The chain runs to 282 residues: Bis(5'-nucleosyl)-tetraphosphatase, symmetrical (282 aa).

Belongs to the Ap4A hydrolase family.

It catalyses the reaction P(1),P(4)-bis(5'-adenosyl) tetraphosphate + H2O = 2 ADP + 2 H(+). In terms of biological role, hydrolyzes diadenosine 5',5'''-P1,P4-tetraphosphate to yield ADP. The chain is Bis(5'-nucleosyl)-tetraphosphatase, symmetrical from Salmonella paratyphi A (strain ATCC 9150 / SARB42).